The following is an 81-amino-acid chain: ATP synthase subunit C, plastid (81 aa).

2 helical membrane-spanning segments follow: residues 3-23 (PLIP…ASIG) and 61-81 (EALT…NPFI).

The protein belongs to the ATPase C chain family. In terms of assembly, F-type ATPases have 2 components, F(1) - the catalytic core - and F(0) - the membrane proton channel. F(1) has five subunits: alpha(3), beta(3), gamma(1), delta(1), epsilon(1). F(0) has four main subunits: a(1), b(1), b'(1) and c(10-14). The alpha and beta chains form an alternating ring which encloses part of the gamma chain. F(1) is attached to F(0) by a central stalk formed by the gamma and epsilon chains, while a peripheral stalk is formed by the delta, b and b' chains.

It localises to the plastid membrane. In terms of biological role, f(1)F(0) ATP synthase produces ATP from ADP in the presence of a proton or sodium gradient. F-type ATPases consist of two structural domains, F(1) containing the extramembraneous catalytic core and F(0) containing the membrane proton channel, linked together by a central stalk and a peripheral stalk. During catalysis, ATP synthesis in the catalytic domain of F(1) is coupled via a rotary mechanism of the central stalk subunits to proton translocation. Key component of the F(0) channel; it plays a direct role in translocation across the membrane. A homomeric c-ring of between 10-14 subunits forms the central stalk rotor element with the F(1) delta and epsilon subunits. This is ATP synthase subunit C, plastid from Aneura mirabilis (Parasitic liverwort).